The chain runs to 202 residues: Na(+)-translocating NADH-quinone reductase subunit E (202 aa).

A run of 6 helical transmembrane segments spans residues 11–31 (AIFV…FLAI), 35–55 (IEAA…TVPV), 81–101 (FLGL…MEMV), 114–134 (GVFL…LFMV), 144–164 (LVYG…LAGI), and 180–200 (LGIT…FSGI).

This sequence belongs to the NqrDE/RnfAE family. In terms of assembly, composed of six subunits; NqrA, NqrB, NqrC, NqrD, NqrE and NqrF.

It is found in the cell inner membrane. The catalysed reaction is a ubiquinone + n Na(+)(in) + NADH + H(+) = a ubiquinol + n Na(+)(out) + NAD(+). In terms of biological role, NQR complex catalyzes the reduction of ubiquinone-1 to ubiquinol by two successive reactions, coupled with the transport of Na(+) ions from the cytoplasm to the periplasm. NqrA to NqrE are probably involved in the second step, the conversion of ubisemiquinone to ubiquinol. This Marinobacter nauticus (strain ATCC 700491 / DSM 11845 / VT8) (Marinobacter aquaeolei) protein is Na(+)-translocating NADH-quinone reductase subunit E.